The chain runs to 236 residues: Purine nucleoside phosphorylase DeoD-type 2 (236 aa).

His-5 lines the a purine D-ribonucleoside pocket. Residues Gly-21, Arg-25, Arg-44, and 88 to 91 (RVGT) contribute to the phosphate site. A purine D-ribonucleoside contacts are provided by residues 180–182 (EME) and 204–205 (SD). The active-site Proton donor is the Asp-205.

It belongs to the PNP/UDP phosphorylase family. In terms of assembly, homohexamer; trimer of homodimers.

It carries out the reaction a purine D-ribonucleoside + phosphate = a purine nucleobase + alpha-D-ribose 1-phosphate. The catalysed reaction is a purine 2'-deoxy-D-ribonucleoside + phosphate = a purine nucleobase + 2-deoxy-alpha-D-ribose 1-phosphate. In terms of biological role, catalyzes the reversible phosphorolytic breakdown of the N-glycosidic bond in the beta-(deoxy)ribonucleoside molecules, with the formation of the corresponding free purine bases and pentose-1-phosphate. In Shewanella oneidensis (strain ATCC 700550 / JCM 31522 / CIP 106686 / LMG 19005 / NCIMB 14063 / MR-1), this protein is Purine nucleoside phosphorylase DeoD-type 2.